The following is a 164-amino-acid chain: UPF0262 protein Xaut_1232 (164 aa).

The protein belongs to the UPF0262 family.

The protein is UPF0262 protein Xaut_1232 of Xanthobacter autotrophicus (strain ATCC BAA-1158 / Py2).